Consider the following 82-residue polypeptide: Delta-actitoxin-Aeq2b 2 (82 aa).

The signal sequence occupies residues 1-19 (MNRLMILVFAAVFLALASA). Positions 20–26 (DEDVDIA) are excised as a propeptide. 3 disulfides stabilise this stretch: Cys-32–Cys-79, Cys-34–Cys-69, and Cys-62–Cys-80.

This sequence belongs to the sea anemone sodium channel inhibitory toxin family. Type I subfamily.

The protein localises to the secreted. Its subcellular location is the nematocyst. Binds specifically to voltage-gated sodium channels (Nav), thereby delaying their inactivation during signal transduction. Causes death to crabs. In Actinia equina (Beadlet anemone), this protein is Delta-actitoxin-Aeq2b 2.